The following is a 179-amino-acid chain: Fucolectin-4 (179 aa).

The signal sequence occupies residues 1 to 23; it reads MEVKTIMLLFQILAISTLKQGSA. Residues 31 to 179 form an F5/8 type C-like region; it reads EENVALRGRA…VEVNALLPVN (149 aa). Residues Asn58, Asp61, Asn63, and Ser72 each coordinate Ca(2+). Cystine bridges form between Cys73/Cys168, Cys104/Cys105, and Cys130/Cys146. Residues His75 and Arg101 each contribute to the alpha-L-fucose site. Residues 101 to 103 carry the Cell attachment site motif; the sequence is RGD. Arg108 lines the alpha-L-fucose pocket. Ca(2+) is bound by residues Cys168 and Glu169.

Belongs to the fucolectin family. As to quaternary structure, homotrimer. As to expression, gill mucous cells.

The protein localises to the secreted. In terms of biological role, acts as a defensive agent. Recognizes blood group fucosylated oligosaccharides including A, B, H and Lewis B-type antigens. Does not recognize Lewis A antigen and has low affinity for monovalent haptens. The polypeptide is Fucolectin-4 (Anguilla japonica (Japanese eel)).